The following is a 414-amino-acid chain: Ornithine aminotransferase (414 aa).

An intrachain disulfide couples C154 to C163. Position 262 is an N6-(pyridoxal phosphate)lysine (K262).

It belongs to the class-III pyridoxal-phosphate-dependent aminotransferase family. In terms of assembly, homodimer. The cofactor is pyridoxal 5'-phosphate. In terms of processing, the disulfide bond between Cys-154 and Cys-163 is reduced by TRX1 which increases OAT catalytic activity.

The protein localises to the cytoplasm. The enzyme catalyses a 2-oxocarboxylate + L-ornithine = L-glutamate 5-semialdehyde + an L-alpha-amino acid. The catalysed reaction is L-ornithine + 2-oxoglutarate = L-glutamate 5-semialdehyde + L-glutamate. The protein operates within amino-acid biosynthesis; L-proline biosynthesis; L-glutamate 5-semialdehyde from L-ornithine: step 1/1. With respect to regulation, unlike for mammalian OATs, activity is increased by TRX1-mediated reduction of the disulfide bond between Cys-154 and Cys-163. Binding to TRX1 may also induce conformational changes that facilitate substrate binding. Functionally, catalyzes the transamination of alpha-ketoglutarate with ornithine or N-acetylornithine and of glutamate-5-semialdehyde with glutamate and alanine. In Plasmodium chabaudi chabaudi, this protein is Ornithine aminotransferase.